A 545-amino-acid chain; its full sequence is Zona pellucida sperm-binding protein 4 (545 aa).

An N-terminal signal peptide occupies residues 1-28; it reads MARQALRSTLWLLPSILLCFPFCLPLSG. Residues 29-518 lie on the Extracellular side of the membrane; it reads QHVTELPGVL…HSGTHADSPT (490 aa). Residues Asn-50 and Asn-74 are each glycosylated (N-linked (GlcNAc...) asparagine). One can recognise a P-type domain in the interval 148-192; sequence KVCSPVPVKERLPCASSTISRGDCEELGCCYSSEEEGADSCYYGN. Positions 197 to 471 constitute a ZP domain; the sequence is HCTKEGHFSI…PSCTVICPAS (275 aa). Asn-228 carries an N-linked (GlcNAc...) asparagine glycan. The O-linked (GalNAc...) threonine glycan is linked to Thr-312. N-linked (GlcNAc...) asparagine glycosylation occurs at Asn-336. Cysteines 377 and 451 form a disulfide. The propeptide at 472–545 is removed in mature form; the sequence is RRRRKSELYF…VSYLATRKQR (74 aa). Asn-483 carries N-linked (GlcNAc...) asparagine glycosylation. A helical transmembrane segment spans residues 519 to 539; it reads LWVMGLSASMVITGVLVVSYL. Over 540–545 the chain is Cytoplasmic; that stretch reads ATRKQR.

This sequence belongs to the ZP domain family. ZPB subfamily. Post-translationally, proteolytically cleaved before the transmembrane segment to yield the secreted ectodomain incorporated in the zona pellucida. As to expression, expressed in oocytes.

The protein localises to the zona pellucida. Its subcellular location is the cell membrane. Component of the zona pellucida, an extracellular matrix surrounding oocytes which mediates sperm binding, induction of the acrosome reaction and prevents post-fertilization polyspermy. The zona pellucida is composed of 3 to 4 glycoproteins, ZP1, ZP2, ZP3, and ZP4. ZP4 may act as a sperm receptor. This is Zona pellucida sperm-binding protein 4 (Zp4) from Rattus norvegicus (Rat).